The chain runs to 156 residues: Large ribosomal subunit protein uL22 (156 aa).

Belongs to the universal ribosomal protein uL22 family. Part of the 50S ribosomal subunit.

Functionally, this protein binds specifically to 23S rRNA. It makes multiple contacts with different domains of the 23S rRNA in the assembled 50S subunit and ribosome. The globular domain of the protein is located near the polypeptide exit tunnel on the outside of the subunit, while an extended beta-hairpin is found that lines the wall of the exit tunnel in the center of the 70S ribosome. The chain is Large ribosomal subunit protein uL22 from Hyperthermus butylicus (strain DSM 5456 / JCM 9403 / PLM1-5).